Here is a 159-residue protein sequence, read N- to C-terminus: Ribosomal RNA large subunit methyltransferase H (159 aa).

Residues Leu76, Gly108, and 127–132 contribute to the S-adenosyl-L-methionine site; that span reads FSHMTF.

It belongs to the RNA methyltransferase RlmH family. As to quaternary structure, homodimer.

The protein localises to the cytoplasm. It carries out the reaction pseudouridine(1915) in 23S rRNA + S-adenosyl-L-methionine = N(3)-methylpseudouridine(1915) in 23S rRNA + S-adenosyl-L-homocysteine + H(+). Its function is as follows. Specifically methylates the pseudouridine at position 1915 (m3Psi1915) in 23S rRNA. This Halothermothrix orenii (strain H 168 / OCM 544 / DSM 9562) protein is Ribosomal RNA large subunit methyltransferase H.